The sequence spans 179 residues: Transcription factor 21 (179 aa).

Residues 20-87 (CDGLKMDSNK…QVQRNAANAR (68 aa)) form a disordered region. Positions 33-46 (TSNESTEESSNCEN) are enriched in low complexity. A compositionally biased stretch (polar residues) spans 70–80 (SGVSQEGKQVQ). In terms of domain architecture, bHLH spans 79 to 131 (VQRNAANARERARMRVLSKAFSRLKTTLPWVPPDTKLSKLDTLRLASSYIAHL).

Efficient DNA binding requires dimerization with another bHLH protein. Forms a heterodimer with TCF3 and binds the E box (5'-CANNTG-3').

The protein localises to the nucleus. Involved in epithelial-mesenchymal interactions in kidney and lung morphogenesis that include epithelial differentiation and branching morphogenesis. May play a role in the specification or differentiation of one or more subsets of epicardial cell types. The protein is Transcription factor 21 (TCF21) of Homo sapiens (Human).